Reading from the N-terminus, the 101-residue chain is ATP-dependent Clp protease adapter protein ClpS 1 (101 aa).

It belongs to the ClpS family. Binds to the N-terminal domain of the chaperone ClpA.

Functionally, involved in the modulation of the specificity of the ClpAP-mediated ATP-dependent protein degradation. The protein is ATP-dependent Clp protease adapter protein ClpS 1 of Bradyrhizobium diazoefficiens (strain JCM 10833 / BCRC 13528 / IAM 13628 / NBRC 14792 / USDA 110).